A 433-amino-acid chain; its full sequence is Serine/threonine-protein kinase STK11 (433 aa).

Residue Ser-31 is modified to Phosphoserine. Lys-44 and Lys-48 each carry N6-acetyllysine. Positions 45-90 (LIGKYLMGDLLGEGSYGKVKEVLDSETLCRRAVKILKKKKLRRIPN) are sufficient for interaction with SIRT1. The Protein kinase domain maps to 49 to 309 (YLMGDLLGEG…IRQIRQHSWF (261 aa)). ATP contacts are provided by residues 55-63 (LGEGSYGKV) and Lys-78. N6-acetyllysine occurs at positions 96 and 97. The Proton acceptor role is filled by Asp-176. Phosphothreonine; by autocatalysis is present on Thr-189. Lys-296 and Lys-311 each carry N6-acetyllysine. Residues 312–331 (KHPPAEAPVPIPPSPDTKDR) are disordered. The span at 316–326 (AEAPVPIPPSP) shows a compositional bias: pro residues. Ser-325 is modified (phosphoserine). Thr-336 bears the Phosphothreonine; by autocatalysis mark. Phosphothreonine; by ATM and autocatalysis is present on Thr-363. The segment at 397-433 (AAQLSTKSRAEGRAPNPARKACSASSKIRRLSACKQQ) is disordered. 2 positions are modified to phosphoserine: Gln-399 and Ser-401. Lys-416 is subject to N6-acetyllysine. Cys-418 is lipidated: S-palmitoyl cysteine. An N6-acetyllysine modification is found at Lys-423. The span at 423–433 (KIRRLSACKQQ) shows a compositional bias: basic residues. Residue Ser-428 is modified to Phosphoserine; by autocatalysis, PKA, PKC/PRKCZ and RPS6KA1. Cysteine methyl ester is present on Cys-430. Cys-430 carries S-farnesyl cysteine lipidation. Lys-431 is subject to N6-acetyllysine. Residues 431-433 (KQQ) constitute a propeptide, removed in mature form.

Belongs to the protein kinase superfamily. CAMK Ser/Thr protein kinase family. LKB1 subfamily. Catalytic component of a trimeric complex composed of STK11/LKB1, STRAD (STRADA or STRADB) and CAB39/MO25 (CAB39/MO25alpha or CAB39L/MO25beta): the complex tethers STK11/LKB1 in the cytoplasm and stimulates its catalytic activity. Found in a ternary complex composed of SMAD4, STK11/LKB1 and STK11IP. Interacts with p53/TP53, SMAD4, STK11IP and WDR6. Interacts with NR4A1. Interacts with NISCH; this interaction may increase STK11 activity. Interacts with PTEN; leading to PTEN phosphorylation. Interacts with SIRT1; the interaction deacetylates STK11. Interacts with CDKN1A. It depends on Mg(2+) as a cofactor. Mn(2+) is required as a cofactor. In terms of processing, phosphorylated by ATM at Thr-363 following ionizing radiation (IR). Phosphorylation at Ser-428 by RPS6KA1 and/or some PKA is required to inhibit cell growth. Phosphorylation at Ser-428 is also required during neuronal polarization to mediate phosphorylation of BRSK1 and BRSK2. Phosphorylation by PKC/PRKCZ at Ser-399 in isoform 2 promotes metformin (or peroxynitrite)-induced nuclear export of STK11 and activation of AMPK. UV radiation-induced phosphorylation at Thr-363 mediates CDKN1A degradation. Post-translationally, acetylated. Deacetylation at Lys-48 enhances cytoplasmic localization and kinase activity in vitro. As to expression, ubiquitously expressed. Strongest expression in testis and fetal liver.

Its subcellular location is the nucleus. The protein localises to the cytoplasm. It is found in the membrane. It localises to the mitochondrion. The enzyme catalyses L-seryl-[protein] + ATP = O-phospho-L-seryl-[protein] + ADP + H(+). It catalyses the reaction L-threonyl-[protein] + ATP = O-phospho-L-threonyl-[protein] + ADP + H(+). Activated by forming a complex with STRAD (STRADA or STRADB) and CAB39/MO25 (CAB39/MO25alpha or CAB39L/MO25beta): STRADA (or STRADB)-binding promotes a conformational change of STK11/LKB1 in an active conformation, which is stabilized by CAB39/MO25alpha (or CAB39L/MO25beta) interacting with the STK11/LKB1 activation loop. Sequestration in the nucleus by NR4A1 prevents it from phosphorylating and activating cytoplasmic AMPK. Its function is as follows. Tumor suppressor serine/threonine-protein kinase that controls the activity of AMP-activated protein kinase (AMPK) family members, thereby playing a role in various processes such as cell metabolism, cell polarity, apoptosis and DNA damage response. Acts by phosphorylating the T-loop of AMPK family proteins, thus promoting their activity: phosphorylates PRKAA1, PRKAA2, BRSK1, BRSK2, MARK1, MARK2, MARK3, MARK4, NUAK1, NUAK2, SIK1, SIK2, SIK3 and SNRK but not MELK. Also phosphorylates non-AMPK family proteins such as STRADA, PTEN and possibly p53/TP53. Acts as a key upstream regulator of AMPK by mediating phosphorylation and activation of AMPK catalytic subunits PRKAA1 and PRKAA2 and thereby regulates processes including: inhibition of signaling pathways that promote cell growth and proliferation when energy levels are low, glucose homeostasis in liver, activation of autophagy when cells undergo nutrient deprivation, and B-cell differentiation in the germinal center in response to DNA damage. Also acts as a regulator of cellular polarity by remodeling the actin cytoskeleton. Required for cortical neuron polarization by mediating phosphorylation and activation of BRSK1 and BRSK2, leading to axon initiation and specification. Involved in DNA damage response: interacts with p53/TP53 and recruited to the CDKN1A/WAF1 promoter to participate in transcription activation. Able to phosphorylate p53/TP53; the relevance of such result in vivo is however unclear and phosphorylation may be indirect and mediated by downstream STK11/LKB1 kinase NUAK1. Also acts as a mediator of p53/TP53-dependent apoptosis via interaction with p53/TP53: translocates to the mitochondrion during apoptosis and regulates p53/TP53-dependent apoptosis pathways. Regulates UV radiation-induced DNA damage response mediated by CDKN1A. In association with NUAK1, phosphorylates CDKN1A in response to UV radiation and contributes to its degradation which is necessary for optimal DNA repair. In terms of biological role, has a role in spermiogenesis. This chain is Serine/threonine-protein kinase STK11, found in Homo sapiens (Human).